Consider the following 1182-residue polypeptide: DNA-directed RNA polymerase subunit beta (1182 aa).

The segment covering 1150–1162 (DEEVEMKDEDDDN) has biased composition (acidic residues). The interval 1150-1182 (DEEVEMKDEDDDNIPNATSALEQVVQPTVTEEE) is disordered. The segment covering 1171 to 1182 (EQVVQPTVTEEE) has biased composition (low complexity).

Belongs to the RNA polymerase beta chain family. The RNAP catalytic core consists of 2 alpha, 1 beta, 1 beta' and 1 omega subunit. When a sigma factor is associated with the core the holoenzyme is formed, which can initiate transcription.

The enzyme catalyses RNA(n) + a ribonucleoside 5'-triphosphate = RNA(n+1) + diphosphate. In terms of biological role, DNA-dependent RNA polymerase catalyzes the transcription of DNA into RNA using the four ribonucleoside triphosphates as substrates. The polypeptide is DNA-directed RNA polymerase subunit beta (Exiguobacterium sp. (strain ATCC BAA-1283 / AT1b)).